Here is a 129-residue protein sequence, read N- to C-terminus: Cytochrome c oxidase subunit 5B, mitochondrial (129 aa).

The N-terminal 31 residues, 1-31, are a transit peptide targeting the mitochondrion; that stretch reads MASRLLRGAGALAAQTLRARGPNGVAVVRSM. 2 positions are modified to N6-acetyllysine: Lys68 and Lys86. Residues Cys91, Cys93, Cys113, and Cys116 each coordinate Zn(2+). Lys121 carries the N6-acetyllysine modification.

Belongs to the cytochrome c oxidase subunit 5B family. As to quaternary structure, component of the cytochrome c oxidase (complex IV, CIV), a multisubunit enzyme composed of 14 subunits. The complex is composed of a catalytic core of 3 subunits MT-CO1, MT-CO2 and MT-CO3, encoded in the mitochondrial DNA, and 11 supernumerary subunits COX4I, COX5A, COX5B, COX6A, COX6B, COX6C, COX7A, COX7B, COX7C, COX8 and NDUFA4, which are encoded in the nuclear genome. The complex exists as a monomer or a dimer and forms supercomplexes (SCs) in the inner mitochondrial membrane with NADH-ubiquinone oxidoreductase (complex I, CI) and ubiquinol-cytochrome c oxidoreductase (cytochrome b-c1 complex, complex III, CIII), resulting in different assemblies (supercomplex SCI(1)III(2)IV(1) and megacomplex MCI(2)III(2)IV(2)).

The protein localises to the mitochondrion inner membrane. It participates in energy metabolism; oxidative phosphorylation. In terms of biological role, component of the cytochrome c oxidase, the last enzyme in the mitochondrial electron transport chain which drives oxidative phosphorylation. The respiratory chain contains 3 multisubunit complexes succinate dehydrogenase (complex II, CII), ubiquinol-cytochrome c oxidoreductase (cytochrome b-c1 complex, complex III, CIII) and cytochrome c oxidase (complex IV, CIV), that cooperate to transfer electrons derived from NADH and succinate to molecular oxygen, creating an electrochemical gradient over the inner membrane that drives transmembrane transport and the ATP synthase. Cytochrome c oxidase is the component of the respiratory chain that catalyzes the reduction of oxygen to water. Electrons originating from reduced cytochrome c in the intermembrane space (IMS) are transferred via the dinuclear copper A center (CU(A)) of subunit 2 and heme A of subunit 1 to the active site in subunit 1, a binuclear center (BNC) formed by heme A3 and copper B (CU(B)). The BNC reduces molecular oxygen to 2 water molecules using 4 electrons from cytochrome c in the IMS and 4 protons from the mitochondrial matrix. In Sus scrofa (Pig), this protein is Cytochrome c oxidase subunit 5B, mitochondrial (COX5B).